Reading from the N-terminus, the 260-residue chain is Collagenase (260 aa).

The N-terminal stretch at 1-16 is a signal peptide; it reads MKFLLVFALALATTSA. A propeptide spanning residues 17 to 30 is cleaved from the precursor; sequence FQHPASIFELREGR. Residues 31–257 form the Peptidase S1 domain; it reads IINGYEAYTG…YMDWIQQNTG (227 aa). Cys60 and Cys76 form a disulfide bridge. Catalysis depends on charge relay system residues His75 and Asp118. Disulfide bonds link Cys181-Cys196 and Cys206-Cys234. Residue Ser210 is the Charge relay system of the active site.

This sequence belongs to the peptidase S1 family.

The protein localises to the secreted. It carries out the reaction Hydrolysis of proteins including native collagen at Xaa-|-Ala bond leaving an N-terminal (75%) and a C-terminal (25%) fragment.. Inhibited by diisopropylfluorophosphate. This enzyme is a serine protease capable of degrading the native triple helix of collagen. Also cleaves the B chain of insulin at the 15-Leu-|-Try-16 and 22-Arg-|-Gly-23 bonds. Hydrolyzes casein, but not Px-Pro-Leu-Gly-Pro-DArg, BzArgNHPh, AcTyrNHPh, 2-naphthyl phosphate, 2-naphthyl butyrate, 2-naphthyl caprylate, 2-naphthyl myristate, L-leucine 2-2-naphthylamide, L-valine 2-naphthylamide, L-cysteine 2-naphthylamide or L-glutarylphenylalanine 2-naphthylamide. The protein is Collagenase of Hypoderma lineatum (Early cattle grub).